Reading from the N-terminus, the 378-residue chain is Spermidine/putrescine import ATP-binding protein PotA (378 aa).

The 231-residue stretch at 18 to 248 (VLLSGISKSF…PKNLFVAGFI (231 aa)) folds into the ABC transporter domain. ATP is bound at residue 50-57 (GPSGCGKT).

It belongs to the ABC transporter superfamily. Spermidine/putrescine importer (TC 3.A.1.11.1) family. As to quaternary structure, the complex is composed of two ATP-binding proteins (PotA), two transmembrane proteins (PotB and PotC) and a solute-binding protein (PotD).

The protein resides in the cell inner membrane. The catalysed reaction is ATP + H2O + polyamine-[polyamine-binding protein]Side 1 = ADP + phosphate + polyamineSide 2 + [polyamine-binding protein]Side 1.. In terms of biological role, part of the ABC transporter complex PotABCD involved in spermidine/putrescine import. Responsible for energy coupling to the transport system. This chain is Spermidine/putrescine import ATP-binding protein PotA, found in Salmonella choleraesuis (strain SC-B67).